A 1116-amino-acid polypeptide reads, in one-letter code: Rho GTPase-activating protein 45 (1116 aa).

The disordered stretch occupies residues 1-72 (MFSRKKRELM…RPTSLSRHAS (72 aa)). Residues 22–31 (GSPNPQSSSG) are compositionally biased toward polar residues. 4 positions are modified to phosphoserine: Ser-23, Ser-72, Ser-92, and Ser-98. Positions 268-538 (EEVDMLLQRC…SSKLYDPGQQ (271 aa)) constitute an F-BAR domain. A coiled-coil region spans residues 375–498 (EHERRRKEIK…QIQEVIRQSD (124 aa)). The segment at 422-457 (VAKAEEEQQGTGPGAGTAASKALDKRRRLEEEAKNK) is disordered. The segment covering 448–457 (RRLEEEAKNK) has biased composition (basic and acidic residues). 4 positions are modified to phosphoserine: Ser-568, Ser-577, Ser-591, and Ser-618. Positions 569 to 658 (PIMRTRKGSF…MSSSEELGDQ (90 aa)) are disordered. Polar residues predominate over residues 621–635 (ISISDTEVGLDTSSG). Residues 643–652 (TSSSGTMSSS) show a composition bias toward low complexity. Residues 699–744 (THRLRKLRTPAKCRECNSYVYFQGAECEECCLACHKKCLETLAIQC) form a Phorbol-ester/DAG-type zinc finger. The Rho-GAP domain occupies 758–971 (QDFSQAALST…TLIVHYGLVF (214 aa)). Phosphoserine is present on residues Ser-946, Ser-1017, Ser-1020, and Ser-1022. Disordered regions lie at residues 1004–1035 (EEAE…SSSD) and 1050–1116 (AGLE…PQFV). 2 stretches are compositionally biased toward polar residues: residues 1080–1090 (FNTNQSNNTSR) and 1105–1116 (GGTSQERQPQFV).

It localises to the cytoplasm. The protein resides in the cell projection. It is found in the ruffle membrane. Functionally, contains a GTPase activator for the Rho-type GTPases (RhoGAP) domain that would be able to negatively regulate the actin cytoskeleton as well as cell spreading. However, also contains N-terminally a BAR-domin which is able to play an autoinhibitory effect on this RhoGAP activity. The polypeptide is Rho GTPase-activating protein 45 (Mus musculus (Mouse)).